The following is a 558-amino-acid chain: MAHSEEQAAVPCAFIRQNSGNSISLDFEPDTEYQFVEQLEERYKCAFCHSVLHNPHQTGCGHRFCQQCIRSLRELNSVPICPVDKEVIKPQEVFKDNCCKREVLNLHVYCKNAPGCNARIILGRFQDHLQHCSFQAVPCPNESCREAMLRKDVKEHLSAYCRFREEKCLYCKRDIVVTNLQDHEENSCPAYPVSCPNRCVQTIPRARVNEHLTVCPEAEQDCPFKHYGCTVKGKRGNLLEHERAALQDHMLLVLEKNYQLEQRISDLYQSLEQKESKIQQLAETVKKFEKELKQFTQMFGRNGTFLSNVQALTSHTDKSAWLEAQVRQLLQIVNQQPSRLDLRSLVDAVDSVKQRITQLEASDQRLVLLEGETSKHDAHINIHKAQLNKNEERFKQLEGACYSGKLIWKVTDYRVKKREAVEGHTVSVFSQPFYTSRCGYRLCARAYLNGDGSGKGTHLSLYFVVMRGEFDSLLQWPFRQRVTLMLLDQSGKKNHIVETFKADPNSSSFKRPDGEMNIASGCPRFVSHSTLENSKNTYIKDDTLFLKVAVDLTDLEDL.

An RING-type zinc finger spans residues 45–85 (CAFCHSVLHNPHQTGCGHRFCQQCIRSLRELNSVPICPVDK). 2 TRAF-type zinc fingers span residues 127–181 (DHLQ…TNLQ) and 182–239 (DHEE…GNLL). A coiled-coil region spans residues 252 to 302 (LVLEKNYQLEQRISDLYQSLEQKESKIQQLAETVKKFEKELKQFTQMFGRN). Lysine 318 is covalently cross-linked (Glycyl lysine isopeptide (Lys-Gly) (interchain with G-Cter in ubiquitin)). Positions 340-400 (LDLRSLVDAV…EERFKQLEGA (61 aa)) form a coiled coil. Residues 345–558 (LVDAVDSVKQ…AVDLTDLEDL (214 aa)) are interaction with EIF2AK2/PKR. An MATH domain is found at 403–550 (SGKLIWKVTD…DDTLFLKVAV (148 aa)).

The protein belongs to the TNF receptor-associated factor family. A subfamily. Homotrimer. Heterotrimer with TRAF3. Associates with TNFRSF5/CD40 through interaction with TRAF3. Associates with LTBR/TNFRSF3, TNFRSF4, TNFRSF8/CD30, TNFRSF11A/RANK, TNFRSF13B/TACI, TNFRSF14, TNFRSF17, TNFRSF19/TROY, RIPK2, MAP3K14, MAP3K5, and TRAF and TNF receptor associated protein TDP2. Interacts (via C-terminus) with EIF2AK2/PKR (via the kinase catalytic domain). Ubiquitinated at Lys-318 by the SCF(FBXL2) complex, leading to its degradation by the proteasome.

The protein resides in the cytoplasm. Its subcellular location is the cytosol. Functionally, adapter protein and signal transducer that links members of the tumor necrosis factor receptor family to different signaling pathways by association with the receptor cytoplasmic domain and kinases. Mediates activation of NF-kappa-B and probably JNK. Seems to be involved in apoptosis. Plays a role in mediating activation of NF-kappa-B by EIF2AK2/PKR. This chain is TNF receptor-associated factor 5 (Traf5), found in Mus musculus (Mouse).